Reading from the N-terminus, the 537-residue chain is Pancreatic secretory granule membrane major glycoprotein GP2 (537 aa).

The signal sequence occupies residues 1–28 (MPHLMERMVGSGLLWLALVSCILTQASA). A beta hairpin region spans residues 41–60 (SYGLDLDCGAPGTPEAHVCF). 11 disulfides stabilise this stretch: Cys-48–Cys-59, Cys-63–Cys-157, Cys-85–Cys-172, Cys-107–Cys-145, Cys-113–Cys-177, Cys-138–Cys-146, Cys-190–Cys-200, Cys-194–Cys-209, Cys-211–Cys-241, Cys-229–Cys-320, and Cys-261–Cys-284. Residues 61–81 (DPCQNYTLLDEPFRSTENSAG) are D10C. A glycan (N-linked (GlcNAc...) (high mannose) asparagine) is linked at Asn-65. Asn-88, Asn-122, and Asn-134 each carry an N-linked (GlcNAc...) asparagine glycan. The 45-residue stretch at 186-230 (VEDKCEKACRPEEECLALNSTWGCFCRQDLNSSDVHSLQPQLDCG) folds into the EGF-like domain. 3 N-linked (GlcNAc...) asparagine glycosylation sites follow: Asn-204, Asn-216, and Asn-260. The segment at 228 to 321 (DCGPREIKVK…TILNINFQCA (94 aa)) is ZP-N. Residues 228-484 (DCGPREIKVK…PSCSRSQVRS (257 aa)) enclose the ZP domain. 2 N-linked (GlcNAc...) asparagine glycosylation sites follow: Asn-291 and Asn-342. The segment at 322 to 345 (YPLDMKVSLQAALQPIVSSLNVSV) is flexible ZP-N/ZP-C linker. The segment at 346-357 (DGNGEFIVRMAL) is internal hydrophobic patch (IHP). The interval 346–484 (DGNGEFIVRM…PSCSRSQVRS (139 aa)) is ZP-C. Residue Asn-362 is glycosylated (N-linked (GlcNAc...) asparagine). Intrachain disulfides connect Cys-401-Cys-461, Cys-422-Cys-477, and Cys-466-Cys-473. Residues 491–499 (LARVLDLGP) are external hydrophobic patch (EHP). Asn-512 carries GPI-anchor amidated asparagine lipidation. The propeptide at 513–537 (GTPSTAGFLVAWPMVLLTVLLAWLF) is removed in mature form.

In terms of assembly, interacts with SYCN. Interacts with bacterial adhesin fimH. In terms of processing, N-glycosylated. Glycosylated Asn-65 may be required for interaction with bacterial adhesin fimH. Expressed in pancreas (at protein level). Specifically expressed by M (microfold) cells which are atypical epithelial cells of the intestine (at protein level).

It localises to the zymogen granule membrane. The protein localises to the secreted. The protein resides in the cell membrane. It is found in the apical cell membrane. Its subcellular location is the membrane raft. It localises to the endosome. Its function is as follows. Functions as an intestinal M-cell transcytotic receptor specific for type-I-piliated bacteria that participates in the mucosal immune response toward these bacteria. At the apical membrane of M-cells it binds fimH, a protein of the bacteria type I pilus tip. Internalizes bound bacteria, like E.coli and S.typhimurium, from the lumen of the intestine and delivers them, through M-cells, to the underlying organized lymphoid follicles where they are captured by antigen-presenting dendritic cells to elicit a mucosal immune response. The polypeptide is Pancreatic secretory granule membrane major glycoprotein GP2 (Homo sapiens (Human)).